The primary structure comprises 333 residues: Taste receptor type 2 member 110 (333 aa).

At 1 to 13 the chain is on the extracellular side; sequence MFSQIISTSDIFT. The helical transmembrane segment at 14–34 threads the bilayer; that stretch reads FTIILFVELVIGILGNGFIAL. At 35-60 the chain is on the cytoplasmic side; that stretch reads VNIMDWTKRRSISSADQILTALAITR. A helical membrane pass occupies residues 61–81; the sequence is FLYVWFMIICILLFMLCPHLL. At 82–89 the chain is on the extracellular side; it reads TRSEIVTS. The chain crosses the membrane as a helical span at residues 90–110; the sequence is IGIIWIVNNHFSVWLATCLGV. Residues 111-133 are Cytoplasmic-facing; it reads FYFLKIANFSNSLFLYLKWRVKK. A helical membrane pass occupies residues 134–154; it reads VVLMIIQVSMIFLILNLLSLS. Over 155–205 the chain is Extracellular; it reads MYDQFSIDVYEGNTSYNLGDSTPFPTISLFINSSKVFVITNSSHIFLPINS. Residues N186 and N195 are each glycosylated (N-linked (GlcNAc...) asparagine). Residues 206 to 226 form a helical membrane-spanning segment; sequence LFMLIPFTVSLVAFLMLIFSL. Residues 227-255 lie on the Cytoplasmic side of the membrane; sequence WKHHKKMQVNAKPPRDASTMAHIKALQTG. Residues 256 to 276 form a helical membrane-spanning segment; the sequence is FSFLLLYAVYLLFIVIGMLSL. Topologically, residues 277-283 are extracellular; sequence RLIGGKL. Residues 284-304 traverse the membrane as a helical segment; sequence ILLFDHISGIGFPISHSFVLI. The Cytoplasmic portion of the chain corresponds to 305-333; it reads LGNNKLRQASLSVLHCLRCRSKDMDTMGP.

Belongs to the G-protein coupled receptor T2R family.

The protein resides in the membrane. Gustducin-coupled receptor implicated in the perception of bitter compounds in the oral cavity and the gastrointestinal tract. Signals through PLCB2 and the calcium-regulated cation channel TRPM5. In Mus musculus (Mouse), this protein is Taste receptor type 2 member 110.